The primary structure comprises 417 residues: UDP-N-acetylglucosamine 1-carboxyvinyltransferase (417 aa).

Residue 22 to 23 (KN) participates in phosphoenolpyruvate binding. Arg92 serves as a coordination point for UDP-N-acetyl-alpha-D-glucosamine. Residue Cys116 is the Proton donor of the active site. The residue at position 116 (Cys116) is a 2-(S-cysteinyl)pyruvic acid O-phosphothioketal. UDP-N-acetyl-alpha-D-glucosamine is bound by residues Asp304 and Ile326.

This sequence belongs to the EPSP synthase family. MurA subfamily.

Its subcellular location is the cytoplasm. It carries out the reaction phosphoenolpyruvate + UDP-N-acetyl-alpha-D-glucosamine = UDP-N-acetyl-3-O-(1-carboxyvinyl)-alpha-D-glucosamine + phosphate. Its pathway is cell wall biogenesis; peptidoglycan biosynthesis. Its function is as follows. Cell wall formation. Adds enolpyruvyl to UDP-N-acetylglucosamine. The polypeptide is UDP-N-acetylglucosamine 1-carboxyvinyltransferase (Geotalea uraniireducens (strain Rf4) (Geobacter uraniireducens)).